The following is a 366-amino-acid chain: Transcription factor MYB28 (366 aa).

2 HTH myb-type domains span residues 9–61 (GEGL…TNYL) and 62–116 (KPEI…KKRL). 2 DNA-binding regions (H-T-H motif) span residues 37 to 61 (WRDI…TNYL) and 89 to 112 (WSVI…NTHL). The disordered stretch occupies residues 124–170 (VTHKPLASSSNPTVDENLNSPNASSSDKQYSRSSSMPFLSRPPPSSC). Positions 130–146 (ASSSNPTVDENLNSPNA) are enriched in polar residues. The span at 147 to 158 (SSSDKQYSRSSS) shows a compositional bias: low complexity.

As to quaternary structure, can form complexes with MYC2, MYC3 or MYC4. As to expression, expressed in generative organs, mature leaves and trichomes.

It is found in the nucleus. Its function is as follows. Major regulator of short-chained aliphatic glucosinolates (GLSs) biosynthesis. Together with MYB29/HAG3 and MYB76/HAG2, promotes aliphatic glucosinolate biosynthesis but represses indolic glucosinolate biosynthesis. Prevents insect performance (e.g. lepidopteran insect Mamestra brassicae and Spodoptera exigua) by promoting glucosinolates. In Arabidopsis thaliana (Mouse-ear cress), this protein is Transcription factor MYB28 (MYB28).